Consider the following 2271-residue polypeptide: Nucleolar pre-ribosomal-associated protein 1 (2271 aa).

A disordered region spans residues 1–43 (MGVPKRKASGGQDGAASSAGAAKRARKEELTGVRFKAQLKDPQ). 2 positions are modified to phosphoserine: serine 17 and serine 1143. Positions 2021–2042 (VMPARAKGPRGRKRRPGEAEEM) are disordered.

Its subcellular location is the nucleus. The protein resides in the nucleolus. The polypeptide is Nucleolar pre-ribosomal-associated protein 1 (URB1) (Homo sapiens (Human)).